The primary structure comprises 235 residues: Probable flavin-dependent thymidylate synthase (235 aa).

Positions 1–229 (MKVQLIASTI…PNTYQDIPTE (229 aa)) constitute a ThyX domain. FAD is bound by residues Ser70 and 93-95 (RHR). Residues 90–93 (ELER), 103–105 (SQR), and Arg168 contribute to the dUMP site. Positions 93–103 (RHRHLSFSVVS) match the ThyX motif motif. 184-186 (NHR) lines the FAD pocket. A dUMP-binding site is contributed by Arg195. The active-site Involved in ionization of N3 of dUMP, leading to its activation is the Arg195.

This sequence belongs to the thymidylate synthase ThyX family. As to quaternary structure, homotetramer. The cofactor is FAD.

The enzyme catalyses dUMP + (6R)-5,10-methylene-5,6,7,8-tetrahydrofolate + NADPH + H(+) = dTMP + (6S)-5,6,7,8-tetrahydrofolate + NADP(+). The protein operates within pyrimidine metabolism; dTTP biosynthesis. In terms of biological role, catalyzes the reductive methylation of 2'-deoxyuridine-5'-monophosphate (dUMP) to 2'-deoxythymidine-5'-monophosphate (dTMP) while utilizing 5,10-methylenetetrahydrofolate (mTHF) as the methyl donor, and NADPH and FADH(2) as the reductant. The protein is Probable flavin-dependent thymidylate synthase (48) of Mycobacterium (Mycobacteriophage D29).